A 548-amino-acid chain; its full sequence is Stretch-activated cation channel MID1 (548 aa).

Residues 1–20 (MIVWQALFVVYCLFTTSIHG) form the signal peptide. The Extracellular segment spans residues 21-341 (LFQDFNPFAN…YLTKKISNGD (321 aa)). N-linked (GlcNAc...) asparagine glycosylation is found at asparagine 32, asparagine 70, asparagine 112, asparagine 125, asparagine 159, asparagine 175, asparagine 228, asparagine 238, asparagine 265, asparagine 282, asparagine 285, asparagine 291, and asparagine 324. A helical membrane pass occupies residues 342-358 (GLSSVGGILFSHVYFTT). The Cytoplasmic portion of the chain corresponds to 359–548 (RSTDVCSLIF…LMVIHPLDDT (190 aa)).

Forms an oligomer with a molecular mass of 200 kDa by disulfide bonds. Interacts with CCH1 to form a Ca(2+) influx channel. N-glycosylated.

It localises to the cell membrane. In terms of biological role, calcium-permeable, cation-selective stretch-activated channel (SAC) that functions together with CCH1 to mediate calcium entry into cells. Required during mating. Together with CCH1, essential for tolerance to iron stress, which leads to an increased oxidative poise, and to cold stress. This is Stretch-activated cation channel MID1 (MID1) from Saccharomyces cerevisiae (strain ATCC 204508 / S288c) (Baker's yeast).